Here is an 85-residue protein sequence, read N- to C-terminus: Large ribosomal subunit protein bL27 (85 aa).

This sequence belongs to the bacterial ribosomal protein bL27 family.

This is Large ribosomal subunit protein bL27 from Campylobacter concisus (strain 13826).